Here is a 465-residue protein sequence, read N- to C-terminus: Myosin-6 (465 aa).

The Myosin motor domain occupies 1–35 (ILERGDALLVVQWNIRAFTGVKKWPWMELYFEIEP). Positions 36–465 (LLKSAEAEKE…YRRKLEEAQR (430 aa)) form a coiled coil. Residues S285 and S334 each carry the phosphoserine modification. Position 456 is a phosphotyrosine (Y456).

In terms of assembly, muscle myosin is a hexameric protein that consists of 2 heavy chain subunits (MHC), 2 alkali light chain subunits (MLC) and 2 regulatory light chain subunits (MLC-2).

It is found in the cytoplasm. It localises to the myofibril. Functionally, muscle contraction. This is Myosin-6 (MYH6) from Oryctolagus cuniculus (Rabbit).